A 307-amino-acid chain; its full sequence is tRNA dimethylallyltransferase 2 (307 aa).

11–18 (GPTASGKT) is a binding site for ATP. 13–18 (TASGKT) contributes to the substrate binding site. The segment at 36 to 39 (DSRQ) is interaction with substrate tRNA.

This sequence belongs to the IPP transferase family. Monomer. Requires Mg(2+) as cofactor.

The enzyme catalyses adenosine(37) in tRNA + dimethylallyl diphosphate = N(6)-dimethylallyladenosine(37) in tRNA + diphosphate. Catalyzes the transfer of a dimethylallyl group onto the adenine at position 37 in tRNAs that read codons beginning with uridine, leading to the formation of N6-(dimethylallyl)adenosine (i(6)A). The sequence is that of tRNA dimethylallyltransferase 2 from Phocaeicola vulgatus (strain ATCC 8482 / DSM 1447 / JCM 5826 / CCUG 4940 / NBRC 14291 / NCTC 11154) (Bacteroides vulgatus).